The chain runs to 167 residues: Piercer of microtubule wall 1 protein (167 aa).

Residues 1–54 (MSEEKPQQSAEEPEPGEPKAKPAPEEPEPGEPKAKPAPEEPEPGEPKAKPAPEK) are disordered. Positions 16 to 54 (GEPKAKPAPEEPEPGEPKAKPAPEEPEPGEPKAKPAPEK) are enriched in basic and acidic residues.

This sequence belongs to the PIERCE1 family. Microtubule inner protein component of sperm flagellar doublet microtubules. Interacts with CFAP53, ODAD1 and ODAD3; the interactions link the outer dynein arms docking complex (ODA-DC) to the internal microtubule inner proteins (MIP) in cilium axoneme. As to expression, expressed in brain, lung, kidney and testis.

The protein resides in the cytoplasm. Its subcellular location is the cytoskeleton. The protein localises to the cilium axoneme. It is found in the flagellum axoneme. Functionally, microtubule inner protein involved in the attachment of outer dynein arms (ODAs) to dynein-decorated doublet microtubules (DMTs) in cilia axoneme. Functions at the initial step of left-right asymmetry specification of the visceral organs. In Mus musculus (Mouse), this protein is Piercer of microtubule wall 1 protein.